The primary structure comprises 223 residues: Sigma non-opioid intracellular receptor 1 (223 aa).

Residues 1–9 (MQWALGRRW) are Lumenal-facing. Residues 2–8 (QWALGRR) form a targeting to endoplasmic reticulum-associated lipid droplets region. The helical transmembrane segment at 10-30 (VWAALLLAAAAVLTQVVWLWL) threads the bilayer. The Cytoplasmic segment spans residues 31–223 (GTQSFVFQHE…FTTYLFGQDS (193 aa)). The interval 99–106 (SLSEYVLL) is important for ligand-binding. The interval 177–223 (VIPSTLAFALADTIFSTQDFLTLFYTLRAYARGLRLEFTTYLFGQDS) is C-terminal hydrophobic region.

The protein belongs to the ERG2 family. In terms of assembly, homotrimer. Forms a ternary complex with ANK2 and ITPR3. The complex is disrupted by agonists. Interacts with KCNA4. Interacts with KCNA2; cocaine consumption leads to increased interaction. Interacts with RNF112 in an oxidative stress-regulated manner.

It is found in the nucleus inner membrane. It localises to the nucleus outer membrane. The protein localises to the nucleus envelope. The protein resides in the cytoplasmic vesicle. Its subcellular location is the endoplasmic reticulum membrane. It is found in the membrane. It localises to the lipid droplet. The protein localises to the cell junction. The protein resides in the cell membrane. Its subcellular location is the cell projection. It is found in the growth cone. It localises to the postsynaptic density membrane. Functionally, functions in lipid transport from the endoplasmic reticulum and is involved in a wide array of cellular functions probably through regulation of the biogenesis of lipid microdomains at the plasma membrane. Involved in the regulation of different receptors it plays a role in BDNF signaling and EGF signaling. Also regulates ion channels like the potassium channel and could modulate neurotransmitter release. Plays a role in calcium signaling through modulation together with ANK2 of the ITP3R-dependent calcium efflux at the endoplasmic reticulum. Plays a role in several other cell functions including proliferation, survival and death. Originally identified for its ability to bind various psychoactive drugs it is involved in learning processes, memory and mood alteration. Necessary for proper mitochondrial axonal transport in motor neurons, in particular the retrograde movement of mitochondria. Plays a role in protecting cells against oxidative stress-induced cell death via its interaction with RNF112. This is Sigma non-opioid intracellular receptor 1 (SIGMAR1) from Mustela erminea (Ermine).